We begin with the raw amino-acid sequence, 534 residues long: Protoheme IX farnesyltransferase (534 aa).

The interval 1-251 (MRREHARAIL…VLLEGKPSLL (251 aa)) is unknown. Helical transmembrane passes span 17 to 37 (PWLL…GGIV), 39 to 59 (ALTG…ALAI), 83 to 103 (YLTL…FGAI), 128 to 148 (LALA…ALAV), 163 to 183 (VAWA…QVLL), 197 to 217 (LMHL…TTLA), 261 to 281 (GVIS…PAGI), 284 to 304 (LSLV…SHSI), 339 to 359 (IALG…LAAI), 360 to 380 (LALA…KRTS), 384 to 404 (IVIG…AVTG), 411 to 431 (LLLW…LALI), 457 to 477 (IVIY…LGML), 479 to 499 (WAYL…ALKL), and 508 to 528 (AWAL…AMAV). The segment at 252 to 530 (KDYISLTKPG…ILFVAMAVDR (279 aa)) is protoheme IX prenyltransferase.

In the C-terminal section; belongs to the UbiA prenyltransferase family. Protoheme IX farnesyltransferase subfamily.

The protein localises to the cell membrane. The catalysed reaction is heme b + (2E,6E)-farnesyl diphosphate + H2O = Fe(II)-heme o + diphosphate. Its pathway is porphyrin-containing compound metabolism; heme O biosynthesis; heme O from protoheme: step 1/1. Converts heme B (protoheme IX) to heme O by substitution of the vinyl group on carbon 2 of heme B porphyrin ring with a hydroxyethyl farnesyl side group. This is Protoheme IX farnesyltransferase (ctaB) from Roseiflexus sp. (strain RS-1).